We begin with the raw amino-acid sequence, 59 residues long: Ferredoxin (59 aa).

Positions 2-29 constitute a 4Fe-4S ferredoxin-type domain; it reads KVSVDKDACIGCGVCASICPDVFEMDDD. Positions 10, 13, and 16 each coordinate [4Fe-4S] cluster. A disulfide bridge links Cys-20 with Cys-43. Cys-51 provides a ligand contact to [4Fe-4S] cluster.

[4Fe-4S] cluster serves as cofactor. Requires [3Fe-4S] cluster as cofactor.

Ferredoxins are iron-sulfur proteins that transfer electrons in a wide variety of metabolic reactions. The polypeptide is Ferredoxin (Thermococcus litoralis).